The chain runs to 86 residues: Triple QxxK/R motif-containing protein (86 aa).

A helical membrane pass occupies residues 51-71; that stretch reads VGLVLAAILALLLAFYAFFYL.

It belongs to the TRIQK family.

Its subcellular location is the endoplasmic reticulum membrane. Functionally, may play a role in cell growth and maintenance of cell morphology. The protein is Triple QxxK/R motif-containing protein (TRIQK) of Pongo abelii (Sumatran orangutan).